The following is a 447-amino-acid chain: Trigger factor (447 aa).

A PPIase FKBP-type domain is found at Gly-164–Pro-249.

Belongs to the FKBP-type PPIase family. Tig subfamily.

Its subcellular location is the cytoplasm. It carries out the reaction [protein]-peptidylproline (omega=180) = [protein]-peptidylproline (omega=0). Involved in protein export. Acts as a chaperone by maintaining the newly synthesized protein in an open conformation. Functions as a peptidyl-prolyl cis-trans isomerase. The protein is Trigger factor of Psychrobacter arcticus (strain DSM 17307 / VKM B-2377 / 273-4).